The following is a 119-amino-acid chain: Large ribosomal subunit protein bL20 (119 aa).

The protein belongs to the bacterial ribosomal protein bL20 family.

Its function is as follows. Binds directly to 23S ribosomal RNA and is necessary for the in vitro assembly process of the 50S ribosomal subunit. It is not involved in the protein synthesizing functions of that subunit. The sequence is that of Large ribosomal subunit protein bL20 from Burkholderia ambifaria (strain MC40-6).